A 376-amino-acid polypeptide reads, in one-letter code: MTQRPFSLLSHLGRICLAAAMLAALPAQAAERLKDLATFQGVRGNQLIGYGLVVGLDGTGDQVRQTPFTQQSLTNMLSQLGITVPAGSNMQLKNVAAVMVTATLPAFARPGQTVDVVVSSMGNAKSLRGGTLLMTPLKGADNSVYAIAQGNVLVGGAGASAGGSSVQINTLNGGRISAGAIVERPVPTSFAQDGLVYLEMNNSDFGTTQNAANAINRQFGAGTAMVMDARVLQLRGPLDPSQMPAFLSQIENLPVTLAPAVAKVIINARTGSVVMNRTVTIEEAAVAHGNLSVIINRQNQVFQPDTPFTDGQTVVAPNTQIEVRQEGGALQRVRTSANLADVVKALNALGATPQDLLAILQAMKAAGALRAELEII.

An N-terminal signal peptide occupies residues Met1–Ala29.

It belongs to the FlgI family. As to quaternary structure, the basal body constitutes a major portion of the flagellar organelle and consists of four rings (L,P,S, and M) mounted on a central rod.

The protein localises to the periplasm. Its subcellular location is the bacterial flagellum basal body. In terms of biological role, assembles around the rod to form the L-ring and probably protects the motor/basal body from shearing forces during rotation. The chain is Flagellar P-ring protein from Bordetella avium (strain 197N).